We begin with the raw amino-acid sequence, 359 residues long: Peptide chain release factor 1 (359 aa).

Residue Gln-235 is modified to N5-methylglutamine. Residues 283–309 (QKAESERSQARRSQVGSGDRSERIRTY) form a disordered region.

It belongs to the prokaryotic/mitochondrial release factor family. In terms of processing, methylated by PrmC. Methylation increases the termination efficiency of RF1.

It is found in the cytoplasm. Its function is as follows. Peptide chain release factor 1 directs the termination of translation in response to the peptide chain termination codons UAG and UAA. The chain is Peptide chain release factor 1 from Brucella abortus (strain S19).